Consider the following 298-residue polypeptide: Cholesterol 25-hydroxylase (298 aa).

Asparagine 5 carries an N-linked (GlcNAc...) asparagine glycan. Helical transmembrane passes span 38 to 58 (FFPV…FVVL), 84 to 104 (LLPC…PVTL), and 124 to 144 (LLSH…AWHL). One can recognise a Fatty acid hydroxylase domain in the interval 128–263 (VLICLLLFDT…FTHWDKMLGT (136 aa)). The short motif at 142–146 (WHLLH) is the Histidine box-1 element. A Histidine box-2 motif is present at residues 157–161 (HKVHH). A glycan (N-linked (GlcNAc...) asparagine) is linked at asparagine 163. The next 2 membrane-spanning stretches (helical) occupy residues 167–187 (FALA…FFDV) and 190–210 (VAML…NIWL). The Histidine box-3 motif lies at 238–244 (HHDLHHS).

This sequence belongs to the sterol desaturase family. It depends on Fe cation as a cofactor. Post-translationally, N-glycosylated. In terms of tissue distribution, expressed in testicular macrophages at all stages, with the highest level in 10 day old animals.

The protein localises to the endoplasmic reticulum membrane. It catalyses the reaction cholesterol + AH2 + O2 = 25-hydroxycholesterol + A + H2O. It carries out the reaction cholesterol + NADPH + O2 + H(+) = 25-hydroxycholesterol + NADP(+) + H2O. Catalyzes the formation of 25-hydroxycholesterol from cholesterol, leading to repress cholesterol biosynthetic enzymes. Plays a key role in cell positioning and movement in lymphoid tissues: 25-hydroxycholesterol is an intermediate in biosynthesis of 7-alpha,25-dihydroxycholesterol (7-alpha,25-OHC), an oxysterol that acts as a ligand for the G protein-coupled receptor GPR183/EBI2, a chemotactic receptor for a number of lymphoid cells. May play an important role in regulating lipid metabolism by synthesizing a corepressor that blocks sterol regulatory element binding protein (SREBP) processing. In testis, production of 25-hydroxycholesterol by macrophages plays a role in Leydig cell differentiation. Required to restrain inflammation in macrophages: production of 25-hydroxycholesterol protects macrophages from cholesterol overload, thereby preventing mitochondrial DNA release and subsequent activation of the AIM2 inflammasome. Interferon-stimulated gene which has broad antiviral activities against a wide range of enveloped viruses. Functionally, catalyzes the formation of 25-hydroxycholesterol from cholesterol, leading to repress cholesterol biosynthetic enzymes. Plays a key role in cell positioning and movement in lymphoid tissues: 25-hydroxycholesterol is an intermediate in biosynthesis of 7-alpha,25-dihydroxycholesterol (7-alpha,25-OHC), an oxysterol that acts as a ligand for the G protein-coupled receptor GPR183/EBI2, a chemotactic receptor for a number of lymphoid cells. May play an important role in regulating lipid metabolism by synthesizing a corepressor that blocks sterol regulatory element binding protein (SREBP) processing. As an interferon-stimulated gene, has broad antiviral activities against a wide range of enveloped viruses. Its product, 25-hydroxycholesterol, activates the ER-localized enzyme ACAT to induce internalization of accessible cholesterol on the plasma membrane and restricts virus-host membranes fusion which inhibits virus replication. In testis, production of 25-hydroxycholesterol by macrophages plays a role in Leydig cell differentiation. In Rattus norvegicus (Rat), this protein is Cholesterol 25-hydroxylase.